A 232-amino-acid polypeptide reads, in one-letter code: 2,3-bisphosphoglycerate-dependent phosphoglycerate mutase 1 (232 aa).

Substrate is bound by residues 8-15 (RHGQSLWN), 21-22 (TG), Arg58, 114-117 (ERYY), Lys125, 141-142 (RR), and 185-186 (GN). The Tele-phosphohistidine intermediate role is filled by His9. The Proton donor/acceptor role is filled by Glu114.

Belongs to the phosphoglycerate mutase family. BPG-dependent PGAM subfamily.

The enzyme catalyses (2R)-2-phosphoglycerate = (2R)-3-phosphoglycerate. Its pathway is carbohydrate degradation; glycolysis; pyruvate from D-glyceraldehyde 3-phosphate: step 3/5. Its function is as follows. Catalyzes the interconversion of 2-phosphoglycerate and 3-phosphoglycerate. The protein is 2,3-bisphosphoglycerate-dependent phosphoglycerate mutase 1 of Gloeobacter violaceus (strain ATCC 29082 / PCC 7421).